Consider the following 66-residue polypeptide: Large ribosomal subunit protein bL32 (66 aa).

Belongs to the bacterial ribosomal protein bL32 family.

The chain is Large ribosomal subunit protein bL32 from Rickettsia bellii (strain OSU 85-389).